The sequence spans 204 residues: MKSTIFFALFLVCAFTISYLPSATAQFVLDTDDDPLQNGGTYYMLPVMRGKSGGIEGNSTGKEICPLTVVQSPNKHNKGIGLVFKSPLHALFIAERYPLSIKFDSFAVIPLCGVMPTKWAIVEREGLQAVTLAARDTVDGWFNIERVSREYNDYYKLVFCPQEAEDNKCEDIGIQIDNDGIRRLVLSKNKPLVVEFQKFRSSTA.

The signal sequence occupies residues 1–25; it reads MKSTIFFALFLVCAFTISYLPSATA. Intrachain disulfides connect Cys65–Cys112 and Cys160–Cys169.

Belongs to the protease inhibitor I3 (leguminous Kunitz-type inhibitor) family. Seed, and at low levels in leaf, root, and stem.

In terms of biological role, has probably no trypsin inhibitor activity. KTi2 is responsible for most of the Kunitz trypsin inhibitor activity and protein found in soybean seeds. The polypeptide is Kunitz-type trypsin inhibitor KTI2 (KTI2) (Glycine max (Soybean)).